The chain runs to 812 residues: MPEEIISRSINDEMITSYMLYSMSVIVGRAIPDVRDGLKPVQRKILFGMLELGLRHNQSYKKSARIVGEVMGKFHPHGDMAIYDALVRMAQPFSMRYPLIQGQGNFGSIDRDPPAAMRYTEARMQRLAEELLADIDKNTVKMIPNFDGSLIEPEVLPAKAPNLLMNGASGIAVGMMTNIPPHNLSELVEALTALIDNPDATIEELMEYVKGPDFPTGGIIMGRDGIKKMYETGRGRMVVRGVAEIEEAKGGTRIVISEIPYGVSKADLIQQIANVAQNVRDIQVRNVRDESDKRGLRVVIELKRGADPNVVLNLLYKHTQLQTTFGAHMLVIDEKKRPKLMNLKEIFQAFIKHRYEVVKRRTEYELEQASKKAHILEGLTKASRAIDTVVDIIRNSKNIQEASVNLQETLEITPEQSQAILEMRLGKLTALEIDKLVTEYAELVEKIKEYREILSDDKNIYQIIKKELQELEAQYGDARRTKISIDGNTDFNVEDVIPDDEVVVTVTKKGYIKATPLEDYRKQGRGGKGIRGVKTTDADFVTNVVSTTRLSKTVVITSKGKAYFINNYELECTSRSSRGKLLANYVKIEPDETVQAVLSVKREEVANKHLIITTRKGKIKRTPFEAFINSRTSGIKAITLNEGDSVVDAGISTSEEETIIISTRKGMVIRFPISQIRPMGRTAAGVKAMALRGDDEVVSATIVLPVDERYLFTATERGVGKRTPLSEYRPQHRAGMGVKNIYGLERTGYVVGSLVVTNEDEIIVITKNGMSIRIPAADIRPTGRVTKGVKVVELRDDDTVASLAVVVDQAEV.

The Topo IIA-type catalytic domain maps to 31 to 496 (IPDVRDGLKP…GNTDFNVEDV (466 aa)). Tyrosine 119 functions as the O-(5'-phospho-DNA)-tyrosine intermediate in the catalytic mechanism. The GyrA-box signature appears at 523–529 (QGRGGKG).

The protein belongs to the type II topoisomerase GyrA/ParC subunit family. Heterotetramer, composed of two GyrA and two GyrB chains. In the heterotetramer, GyrA contains the active site tyrosine that forms a transient covalent intermediate with DNA, while GyrB binds cofactors and catalyzes ATP hydrolysis.

Its subcellular location is the cytoplasm. The catalysed reaction is ATP-dependent breakage, passage and rejoining of double-stranded DNA.. In terms of biological role, a type II topoisomerase that negatively supercoils closed circular double-stranded (ds) DNA in an ATP-dependent manner to modulate DNA topology and maintain chromosomes in an underwound state. Negative supercoiling favors strand separation, and DNA replication, transcription, recombination and repair, all of which involve strand separation. Also able to catalyze the interconversion of other topological isomers of dsDNA rings, including catenanes and knotted rings. Type II topoisomerases break and join 2 DNA strands simultaneously in an ATP-dependent manner. This chain is DNA gyrase subunit A, found in Kosmotoga olearia (strain ATCC BAA-1733 / DSM 21960 / TBF 19.5.1).